The chain runs to 505 residues: UDP-N-acetylmuramyl-tripeptide synthetase (505 aa).

Ser-35 contacts UDP-N-acetyl-alpha-D-muramoyl-L-alanyl-D-glutamate. 118–124 (GTDGKSS) is an ATP binding site. Residues 163–164 (ST), Thr-190, and Arg-200 each bind UDP-N-acetyl-alpha-D-muramoyl-L-alanyl-D-glutamate. Lys-232 carries the N6-carboxylysine modification.

It belongs to the MurCDEF family. MurE subfamily. In terms of processing, carboxylation is probably crucial for Mg(2+) binding and, consequently, for the gamma-phosphate positioning of ATP.

It localises to the cytoplasm. It participates in cell wall biogenesis; peptidoglycan biosynthesis. Its function is as follows. Catalyzes the addition of an amino acid to the nucleotide precursor UDP-N-acetylmuramoyl-L-alanyl-D-glutamate (UMAG) in the biosynthesis of bacterial cell-wall peptidoglycan. The chain is UDP-N-acetylmuramyl-tripeptide synthetase from Borreliella afzelii (strain PKo) (Borrelia afzelii).